We begin with the raw amino-acid sequence, 626 residues long: DNA (cytosine-5)-methyltransferase DRM2 (626 aa).

UBA domains lie at 59-101 and 109-150; these read GFSD…ISKY and SSKS…LLSC. Acidic residues predominate over residues 160–187; that stretch reads VEEEDGIDWSSSDDDTNYTDMLNSDDEK. Disordered regions lie at residues 160-196 and 245-282; these read VEEE…ENGS and TEHE…PNPM. The 43-residue stretch at 190-232 folds into the UBA 3 domain; sequence NSNENGSKIRSLVKMGFSELEASLAVERCGENVDIAELTDFLC. Over residues 262–276 the composition is skewed to basic and acidic residues; it reads ESKGEPRSSVDDEPI. Residues 295–626 form the SAM-dependent MTase DRM-type domain; the sequence is THRSLPELAR…EVVRARMRGS (332 aa).

The protein belongs to the class I-like SAM-binding methyltransferase superfamily. DRM-methyltransferase family. Interacts with RDM1. In terms of tissue distribution, expressed in roots, inflorescences and at lower levels in leaves.

The protein localises to the nucleus. It is found in the nucleoplasm. It catalyses the reaction a 2'-deoxycytidine in DNA + S-adenosyl-L-methionine = a 5-methyl-2'-deoxycytidine in DNA + S-adenosyl-L-homocysteine + H(+). Its function is as follows. Involved in de novo DNA methylation. Controls asymmetric and CpNpG methylation. Required for FWA gene silencing but not for the maintenance of SUP gene silencing. Functionally redundant to CMT3 to maintain non-CpG methylation. Involved in RNA-directed DNA methylation (RdDM). Acts as major DNA methyltransferase in the RdDM pathway, and is essential for RNA-directed de novo DNA methylation of cytosines in all sequence contexts. Associates with long non-coding RNA (lncRNA) produced by RNA polymerase V (Pol V). This association is dependent on AGO4 and IDN2, and results in DNA methylation of RdDM target loci. The polypeptide is DNA (cytosine-5)-methyltransferase DRM2 (DRM2) (Arabidopsis thaliana (Mouse-ear cress)).